The primary structure comprises 170 residues: 4-hydroxyphenylacetate 3-monooxygenase reductase component (170 aa).

The protein belongs to the non-flavoprotein flavin reductase family. HpaC subfamily. In terms of assembly, homodimer. 4-HPA 3-monooxygenase consists of a reductase component HpaC and an oxygenase component HpaB.

It catalyses the reaction a reduced flavin + NAD(+) = an oxidized flavin + NADH + 2 H(+). It participates in aromatic compound metabolism; 4-hydroxyphenylacetate degradation; pyruvate and succinate semialdehyde from 4-hydroxyphenylacetate: step 1/7. Functionally, catalyzes the reduction of free flavins (FMN, FAD and riboflavin) by NADH. Subsequently, the reduced flavins diffuse to the large HpaB component or to other electron acceptors such as cytochrome c and Fe(3+) ion. The chain is 4-hydroxyphenylacetate 3-monooxygenase reductase component (hpaC) from Escherichia coli.